The primary structure comprises 503 residues: Intracellular exo-alpha-(1-&gt;5)-L-arabinofuranosidase (503 aa).

Residues glutamate 27, asparagine 72, and asparagine 172 each coordinate alpha-L-arabinofuranose. The active-site Proton donor/acceptor is the glutamate 173. 3 residues coordinate alpha-L-arabinofuranose: tyrosine 244, glutamate 292, and glutamine 352. Glutamate 292 serves as the catalytic Nucleophile.

This sequence belongs to the glycosyl hydrolase 51 family. In terms of assembly, homohexamer; trimer of dimers.

It is found in the cytoplasm. The catalysed reaction is Hydrolysis of terminal non-reducing alpha-L-arabinofuranoside residues in alpha-L-arabinosides.. Its pathway is glycan metabolism; L-arabinan degradation. Involved in the degradation of arabinan and is a key enzyme in the complete degradation of the plant cell wall. Catalyzes the cleavage of terminal alpha-(1-&gt;5)-arabinofuranosyl bonds in small oligosaccharides as alpha-(1-&gt;5)-linked arabinobiose/arabinotriose, but does not display significant activity against linear non-substituted arabinan. It is also highly efficient in the cleavage of alpha-(1-&gt;3)-linked arabinoside of xylobiose and of the alpha-(1-&gt;3)-linked arabinoside decorations of polymeric wheat arabinoxylan. It exhibits very low activity against sugar beet arabinan. The sequence is that of Intracellular exo-alpha-(1-&gt;5)-L-arabinofuranosidase from Acetivibrio thermocellus (strain ATCC 27405 / DSM 1237 / JCM 9322 / NBRC 103400 / NCIMB 10682 / NRRL B-4536 / VPI 7372) (Clostridium thermocellum).